Reading from the N-terminus, the 607-residue chain is Elongation factor 4 (607 aa).

A tr-type G domain is found at 11 to 193 (GKIRNFSIIA…QIVEKVPAPT (183 aa)). GTP-binding positions include 23–28 (DHGKST) and 140–143 (NKID).

Belongs to the TRAFAC class translation factor GTPase superfamily. Classic translation factor GTPase family. LepA subfamily.

Its subcellular location is the cell membrane. It catalyses the reaction GTP + H2O = GDP + phosphate + H(+). Its function is as follows. Required for accurate and efficient protein synthesis under certain stress conditions. May act as a fidelity factor of the translation reaction, by catalyzing a one-codon backward translocation of tRNAs on improperly translocated ribosomes. Back-translocation proceeds from a post-translocation (POST) complex to a pre-translocation (PRE) complex, thus giving elongation factor G a second chance to translocate the tRNAs correctly. Binds to ribosomes in a GTP-dependent manner. This chain is Elongation factor 4, found in Streptococcus pneumoniae (strain JJA).